The sequence spans 188 residues: GTP cyclohydrolase 1 (188 aa).

Residues C76, H79, and C148 each coordinate Zn(2+).

It belongs to the GTP cyclohydrolase I family. In terms of assembly, homomer.

It carries out the reaction GTP + H2O = 7,8-dihydroneopterin 3'-triphosphate + formate + H(+). It participates in cofactor biosynthesis; 7,8-dihydroneopterin triphosphate biosynthesis; 7,8-dihydroneopterin triphosphate from GTP: step 1/1. This Thermoanaerobacter pseudethanolicus (strain ATCC 33223 / 39E) (Clostridium thermohydrosulfuricum) protein is GTP cyclohydrolase 1.